We begin with the raw amino-acid sequence, 579 residues long: Nuclear hormone receptor family member nhr-22 (579 aa).

Positions 93 to 173 form a DNA-binding region, nuclear receptor; that stretch reads SRSCHVCSSP…AGMRRELVQA (81 aa). NR C4-type zinc fingers lie at residues 96 to 117 and 133 to 161; these read CHVCSSPTANTLHFGGRSCKAC and CIGTGDDTNPCRTHYELRMICRHCRFIKC. Residues 233 to 242 are compositionally biased toward low complexity; the sequence is LSPDPSSSQP. The tract at residues 233-256 is disordered; it reads LSPDPSSSQPLDMTVTPPPLHRST. Positions 304–577 constitute an NR LBD domain; it reads EVENKIFELV…SIMYDLLSFR (274 aa).

The protein belongs to the nuclear hormone receptor family.

It is found in the nucleus. Functionally, orphan nuclear receptor. The polypeptide is Nuclear hormone receptor family member nhr-22 (nhr-22) (Caenorhabditis elegans).